A 365-amino-acid chain; its full sequence is Histidinol-phosphate aminotransferase (365 aa).

Residues 1–22 (MSRPVPNPGILDIAPYTPGKSP) form a disordered region. Lys-221 carries the N6-(pyridoxal phosphate)lysine modification.

This sequence belongs to the class-II pyridoxal-phosphate-dependent aminotransferase family. Histidinol-phosphate aminotransferase subfamily. As to quaternary structure, homodimer. It depends on pyridoxal 5'-phosphate as a cofactor.

The enzyme catalyses L-histidinol phosphate + 2-oxoglutarate = 3-(imidazol-4-yl)-2-oxopropyl phosphate + L-glutamate. It functions in the pathway amino-acid biosynthesis; L-histidine biosynthesis; L-histidine from 5-phospho-alpha-D-ribose 1-diphosphate: step 7/9. The polypeptide is Histidinol-phosphate aminotransferase (Nitrobacter winogradskyi (strain ATCC 25391 / DSM 10237 / CIP 104748 / NCIMB 11846 / Nb-255)).